The chain runs to 65 residues: Metallothionein-B (65 aa).

It belongs to the metallothionein superfamily. Type 4 family.

Functionally, metallothioneins have a high content of cysteine residues that bind various heavy metals. The polypeptide is Metallothionein-B (MTB1) (Strongylocentrotus purpuratus (Purple sea urchin)).